The primary structure comprises 414 residues: NADH-ubiquinone oxidoreductase chain 4 (414 aa).

Transmembrane regions (helical) follow at residues 18 to 38 (LVQL…MIGV), 47 to 67 (IAAF…LMSI), 96 to 116 (IIFI…PLHL), 126 to 146 (PTAG…YGYI), 160 to 180 (YFPI…IATL), 188 to 208 (IVAY…FSGV), 216 to 236 (IILM…IGVI), 254 to 274 (MMPI…AFPI), 293 to 313 (IIIA…SFWL), and 375 to 395 (VNIF…IVGM).

Belongs to the complex I subunit 4 family.

The protein resides in the mitochondrion membrane. It catalyses the reaction a ubiquinone + NADH + 5 H(+)(in) = a ubiquinol + NAD(+) + 4 H(+)(out). Functionally, core subunit of the mitochondrial membrane respiratory chain NADH dehydrogenase (Complex I) that is believed to belong to the minimal assembly required for catalysis. Complex I functions in the transfer of electrons from NADH to the respiratory chain. The immediate electron acceptor for the enzyme is believed to be ubiquinone. In Dictyostelium citrinum (Slime mold), this protein is NADH-ubiquinone oxidoreductase chain 4 (nad4).